Consider the following 733-residue polypeptide: Methionine--tRNA ligase (733 aa).

The short motif at 11-21 (PYANGPIHAGH) is the 'HIGH' region element. Positions 143, 146, 156, and 159 each coordinate Zn(2+). The 'KMSKS' region motif lies at 345–349 (KFSTS). Thr348 lines the ATP pocket. Residues 633–733 (DFMKLDLRVG…KEVKLGARIR (101 aa)) enclose the tRNA-binding domain.

Belongs to the class-I aminoacyl-tRNA synthetase family. MetG type 1 subfamily. In terms of assembly, homodimer. The cofactor is Zn(2+).

It localises to the cytoplasm. It carries out the reaction tRNA(Met) + L-methionine + ATP = L-methionyl-tRNA(Met) + AMP + diphosphate. In terms of biological role, is required not only for elongation of protein synthesis but also for the initiation of all mRNA translation through initiator tRNA(fMet) aminoacylation. The sequence is that of Methionine--tRNA ligase from Thermococcus onnurineus (strain NA1).